Reading from the N-terminus, the 520-residue chain is MTATPAVIGLSAGNRLLSASFGPTDLMPDKVSLGVGGGGGGGGGGGGGDAMSFAPPAPATPKLTAVAAHRLKLSPHGRAQVMRALRHHSSAAAALAPPPPPPPPPTPSPASRAAHAHDLESSLEAIVLLQRSMLEKQWELPFDDDNHAMAIGLAEDDDDTSKATVVVARSSVSARQRRMSGRRRGRTKNGAAHFAVSPELIQSRNRIYLRGTVSKELLTHKQVVHLSHKIKDGIWLQQQRSKLKEKLGNEPSYKQLAHSLKISPPELRSRMHESFLAREMLTMSNLRLVISIAQKYDNLGVELADLIQGGLIGLLRGIEKFDASRGFRISTYVYWWIRQGVSRALAENSKTFRLPTYLHERLIAIRGAKYELEDQGIAPTIENIAGSLNISEKKVLNATEAVNKVLSLDQQAFPSLNGLPGETLHSYIEDQNVANDPWHGFEEWYLKEEVNKLLNSTLNERERDIIRLYHGIGKQCHTWEDISRQFGLSRERVRQVGLIAMEKLKHAARRKNLEALLEDY.

The N-terminal 66 residues, 1 to 66 (MTATPAVIGL…APATPKLTAV (66 aa)), are a transit peptide targeting the chloroplast. Residues 37–49 (GGGGGGGGGGGGD) are compositionally biased toward gly residues. Disordered stretches follow at residues 37–57 (GGGG…APPA), 87–117 (HHSS…AHAH), and 171–190 (SVSA…TKNG). A compositionally biased stretch (pro residues) spans 96 to 108 (APPPPPPPPPTPS). A compositionally biased stretch (basic residues) spans 175 to 187 (RQRRMSGRRRGRT). The short motif at 305–318 (DLIQGGLIGLLRGI) is the Polymerase core binding element. Positions 479 to 498 (WEDISRQFGLSRERVRQVGL) form a DNA-binding region, H-T-H motif.

Belongs to the sigma-70 factor family. As to expression, expressed in shoots. Expressed in the tips of fully elongated leaves. Expressed in leaf blades.

Its subcellular location is the plastid. It is found in the chloroplast. Functionally, sigma factors are initiation factors that promote the attachment of plastid-encoded RNA polymerase (PEP) to specific initiation sites and are then released. Controls the transcription of the psaA and psaB genes in chloroplast, and thus maintains the abundance of the core protein complex PsaA-PsaB of photosystem I (PSI) in the thylakoid membrane. Maintains PSI activity, sufficient rate of electron transfer from PSII to PSI, and photochemical efficiency. This is RNA polymerase sigma factor sigA from Oryza sativa subsp. japonica (Rice).